The sequence spans 318 residues: Aspartate carbamoyltransferase catalytic subunit (318 aa).

R64 and T65 together coordinate carbamoyl phosphate. K92 is an L-aspartate binding site. R114, H142, and Q145 together coordinate carbamoyl phosphate. Residues R175 and R229 each coordinate L-aspartate. 2 residues coordinate carbamoyl phosphate: G270 and P271.

This sequence belongs to the aspartate/ornithine carbamoyltransferase superfamily. ATCase family. As to quaternary structure, heterododecamer (2C3:3R2) of six catalytic PyrB chains organized as two trimers (C3), and six regulatory PyrI chains organized as three dimers (R2).

The catalysed reaction is carbamoyl phosphate + L-aspartate = N-carbamoyl-L-aspartate + phosphate + H(+). Its pathway is pyrimidine metabolism; UMP biosynthesis via de novo pathway; (S)-dihydroorotate from bicarbonate: step 2/3. In terms of biological role, catalyzes the condensation of carbamoyl phosphate and aspartate to form carbamoyl aspartate and inorganic phosphate, the committed step in the de novo pyrimidine nucleotide biosynthesis pathway. This is Aspartate carbamoyltransferase catalytic subunit from Rhodospirillum centenum (strain ATCC 51521 / SW).